Here is a 132-residue protein sequence, read N- to C-terminus: Small ribosomal subunit protein uS8 (132 aa).

Belongs to the universal ribosomal protein uS8 family. In terms of assembly, part of the 30S ribosomal subunit. Contacts proteins S5 and S12.

One of the primary rRNA binding proteins, it binds directly to 16S rRNA central domain where it helps coordinate assembly of the platform of the 30S subunit. This Pseudarthrobacter chlorophenolicus (strain ATCC 700700 / DSM 12829 / CIP 107037 / JCM 12360 / KCTC 9906 / NCIMB 13794 / A6) (Arthrobacter chlorophenolicus) protein is Small ribosomal subunit protein uS8.